Reading from the N-terminus, the 448-residue chain is Deoxyguanosinetriphosphate triphosphohydrolase-like protein (448 aa).

Residues 67-260 enclose the HD domain; that stretch reads RLTHSLEVSQ…MELADDIAYG (194 aa).

It belongs to the dGTPase family. Type 2 subfamily.

The polypeptide is Deoxyguanosinetriphosphate triphosphohydrolase-like protein (Aliivibrio salmonicida (strain LFI1238) (Vibrio salmonicida (strain LFI1238))).